Here is a 124-residue protein sequence, read N- to C-terminus: Hydrogenase maturation factor HypA (124 aa).

H2 provides a ligand contact to Ni(2+). Zn(2+)-binding residues include C78, C81, C97, and C100.

It belongs to the HypA/HybF family.

In terms of biological role, involved in the maturation of [NiFe] hydrogenases. Required for nickel insertion into the metal center of the hydrogenase. The protein is Hydrogenase maturation factor HypA of Methanocaldococcus jannaschii (strain ATCC 43067 / DSM 2661 / JAL-1 / JCM 10045 / NBRC 100440) (Methanococcus jannaschii).